We begin with the raw amino-acid sequence, 178 residues long: ATP-dependent protease subunit HslV (178 aa).

The active site involves threonine 7. Na(+) is bound by residues glycine 162, cysteine 165, and threonine 168.

It belongs to the peptidase T1B family. HslV subfamily. As to quaternary structure, a double ring-shaped homohexamer of HslV is capped on each side by a ring-shaped HslU homohexamer. The assembly of the HslU/HslV complex is dependent on binding of ATP.

It localises to the cytoplasm. The catalysed reaction is ATP-dependent cleavage of peptide bonds with broad specificity.. Allosterically activated by HslU binding. Its function is as follows. Protease subunit of a proteasome-like degradation complex believed to be a general protein degrading machinery. The sequence is that of ATP-dependent protease subunit HslV from Cupriavidus taiwanensis (strain DSM 17343 / BCRC 17206 / CCUG 44338 / CIP 107171 / LMG 19424 / R1) (Ralstonia taiwanensis (strain LMG 19424)).